The sequence spans 256 residues: MTDPRKAHDAEPTTHFGYKNVPESQKAQKVAEVFHSVAAKYDLMNDLMSGGIHRLWKRFTIELSGARHGNRILDIAGGTGDLTRQFSRIVGPTGEVVLADINASMLKVGRDKLLDKGVAGNVRFVQADAEKLPFPDNYFDVVTIAFGLRNVTHKEDAIASMLRVLKPGGRLLVLEFSKPTNQLFSKAYDAYSFSLLPMMGKLITNDSESYRYLAESIRMHPDQETLKGMMEAAGFERVSYHNMTGGIVALHRGIKP.

S-adenosyl-L-methionine is bound by residues Thr79, Asp100, and 128–129 (DA).

Belongs to the class I-like SAM-binding methyltransferase superfamily. MenG/UbiE family.

It catalyses the reaction a 2-demethylmenaquinol + S-adenosyl-L-methionine = a menaquinol + S-adenosyl-L-homocysteine + H(+). The enzyme catalyses a 2-methoxy-6-(all-trans-polyprenyl)benzene-1,4-diol + S-adenosyl-L-methionine = a 5-methoxy-2-methyl-3-(all-trans-polyprenyl)benzene-1,4-diol + S-adenosyl-L-homocysteine + H(+). It participates in quinol/quinone metabolism; menaquinone biosynthesis; menaquinol from 1,4-dihydroxy-2-naphthoate: step 2/2. Its pathway is cofactor biosynthesis; ubiquinone biosynthesis. Functionally, methyltransferase required for the conversion of demethylmenaquinol (DMKH2) to menaquinol (MKH2) and the conversion of 2-polyprenyl-6-methoxy-1,4-benzoquinol (DDMQH2) to 2-polyprenyl-3-methyl-6-methoxy-1,4-benzoquinol (DMQH2). This Stutzerimonas stutzeri (strain A1501) (Pseudomonas stutzeri) protein is Ubiquinone/menaquinone biosynthesis C-methyltransferase UbiE.